Consider the following 655-residue polypeptide: Sphingomyelin phosphodiesterase 3 (655 aa).

The Cytoplasmic portion of the chain corresponds to 1–10 (MVLYTTPFPN). The helical intramembrane region spans 11–31 (SCLSALHAVSWALIFPCYWLV). At 32 to 64 (DRLVASFIPTTYEKRQRADDPCYLQLFCTVLFT) the chain is on the cytoplasmic side. 2 S-palmitoyl cysteine lipidation sites follow: Cys53 and Cys59. An intramembrane region (helical) is located at residues 65 to 85 (PVYLALLVAALPFAFLGFIFW). Residues 86–655 (SPLQSARRPY…LMVSAGEEEA (570 aa)) are Cytoplasmic-facing. Position 178 is a phosphoserine (Ser178). Disordered regions lie at residues 209–237 (VEYK…DGSL) and 250–320 (GGRA…SNSK). Residues 211-221 (YKGDGGRHPSD) show a composition bias toward basic and acidic residues. Ser289 is modified (phosphoserine). Glu362 provides a ligand contact to Mg(2+). Residues Cys395 and Cys396 are each lipidated (S-palmitoyl cysteine). Catalysis depends on His639, which acts as the Proton acceptor.

This sequence belongs to the neutral sphingomyelinase family. Mg(2+) serves as cofactor. Post-translationally, palmitoylated, palmitoylation-deficient proteins are targeted for lysosomal degradation. As to expression, in brain sections, it is restricted to neurons and especially prominent in large cells, including Purkinje cells, pyramidal cells, neurons of the dentate gyrus granular layer, and neurons in the pontine nuclei. Also present in the hypothalamic nuclei, neurons in the piriform cortex, and nuclei of the brainstem (at protein level). Mainly expressed in brain and jejunum. Weakly or not expressed in heart, spleen, lung, liver, kidney and testis.

The protein resides in the golgi apparatus membrane. The protein localises to the cell membrane. The catalysed reaction is a sphingomyelin + H2O = phosphocholine + an N-acylsphing-4-enine + H(+). It carries out the reaction N-(15Z-tetracosenoyl)sphing-4-enine-1-phosphocholine + H2O = N-(15Z-tetracosenoyl)-sphing-4-enine + phosphocholine + H(+). The enzyme catalyses N-(tetracosanoyl)-sphing-4-enine-1-phosphocholine + H2O = N-tetracosanoyl-sphing-4-enine + phosphocholine + H(+). It catalyses the reaction an N-(acyl)-sphingosylphosphocholine + H2O = an N-acyl-sphingoid base + phosphocholine + H(+). The catalysed reaction is 1-hexadecanoyl-sn-glycero-3-phosphocholine + H2O = 1-hexadecanoyl-sn-glycerol + phosphocholine + H(+). It carries out the reaction 1-O-octadecyl-sn-glycero-3-phosphocholine + H2O = 1-O-octadecyl-sn-glycerol + phosphocholine + H(+). The enzyme catalyses a sphingosylphosphocholine + H2O = a sphingoid base + phosphocholine + H(+). It catalyses the reaction N-(hexadecanoyl)-sphing-4-enine-1-phosphocholine + H2O = N-hexadecanoylsphing-4-enine + phosphocholine + H(+). The protein operates within lipid metabolism; sphingolipid metabolism. Its activity is regulated as follows. Inhibited by nSMase inhibitor GW4869. Binding of anionic phospholipids (APLs) such as phosphatidylserine (PS) and phosphatidic acid (PA) increases enzymatic activity. Its function is as follows. Catalyzes the hydrolysis of sphingomyelin to form ceramide and phosphocholine. Ceramide mediates numerous cellular functions, such as apoptosis and growth arrest, and is capable of regulating these 2 cellular events independently. Also hydrolyzes sphingosylphosphocholine. Binds to anionic phospholipids (APLs) such as phosphatidylserine (PS) and phosphatidic acid (PA) that modulate enzymatic activity and subcellular location. Regulates the cell cycle by acting as a growth suppressor in confluent cells. Acts as a regulator of postnatal development and participates in bone and dentin mineralization. May be involved in IL-1-beta-induced JNK activation in hepatocytes. May act as a mediator in transcriptional regulation of NOS2/iNOS via the NF-kappa-B activation under inflammatory conditions. This is Sphingomyelin phosphodiesterase 3 from Rattus norvegicus (Rat).